The primary structure comprises 250 residues: Nuclear transcription factor Y subunit C-4 (250 aa).

A compositionally biased stretch (low complexity) spans 1 to 10 (MDNNNNNNNQ). Disordered regions lie at residues 1-35 (MDNN…PSGS) and 209-250 (GVYA…DSQG). Polar residues predominate over residues 214–225 (PPSQAWQSVWQN). Gly residues predominate over residues 227 to 242 (AGGGDDVSYGSGGSSG).

The protein belongs to the NFYC/HAP5 subunit family. In terms of assembly, heterotrimeric transcription factor composed of three components, NF-YA, NF-YB and NF-YC. NF-YB and NF-YC must interact and dimerize for NF-YA association and DNA binding. Ubiquitous. Present in etiolated seedlings.

It is found in the nucleus. In terms of biological role, stimulates the transcription of various genes by recognizing and binding to a CCAAT motif in promoters. Involved in the abscisic acid (ABA) signaling pathway. The protein is Nuclear transcription factor Y subunit C-4 (NFYC4) of Arabidopsis thaliana (Mouse-ear cress).